Consider the following 481-residue polypeptide: Glutamate mutase epsilon subunit (481 aa).

L-glutamate is bound at residue Arg67. Residue Gly69 coordinates adenosylcob(III)alamin. Arg99 is a binding site for L-glutamate. Asn122 contributes to the adenosylcob(III)alamin binding site. L-glutamate contacts are provided by residues Arg148 to His149, Glu170, and Tyr176. Pro179 provides a ligand contact to adenosylcob(III)alamin. Residue Tyr180 coordinates L-glutamate. Residues Phe296, Lys325, Glu329, and Ile333 each contribute to the adenosylcob(III)alamin site.

Belongs to the methylaspartate mutase GlmE subunit family. In terms of assembly, heterotetramer composed of 2 epsilon subunits (GlmE) and 2 sigma subunits (GlmS). GlmE exists as a homodimer and GlmS as a monomer. Adenosylcob(III)alamin serves as cofactor.

The catalysed reaction is (2S,3S)-3-methyl-L-aspartate = L-glutamate. Its pathway is amino-acid degradation; L-glutamate degradation via mesaconate pathway; acetate and pyruvate from L-glutamate: step 1/4. Catalyzes the carbon skeleton rearrangement of L-glutamate to L-threo-3-methylaspartate ((2S,3S)-3-methylaspartate). This Yersinia enterocolitica serotype O:8 / biotype 1B (strain NCTC 13174 / 8081) protein is Glutamate mutase epsilon subunit.